The primary structure comprises 408 residues: Phosphoenolpyruvate/phosphate translocator 1, chloroplastic (408 aa).

Residues 1-66 (MQSAAAVGLL…ISARRIGLVP (66 aa)) constitute a chloroplast transit peptide. The next 7 helical transmembrane spans lie at 105–125 (TLQL…FNIY), 139–159 (ITNV…ITGI), 165–185 (ISGA…MGNL), 222–242 (PTPF…LASL), 245–262 (ASFN…NVTF), 283–303 (ITLF…VTLL), and 375–395 (TPVS…VFLY). The EamA domain maps to 124 to 241 (IYNKQVLKVF…PIVGGVALAS (118 aa)).

Belongs to the TPT transporter family. PPT (TC 2.A.7.9) subfamily.

It localises to the plastid. The protein localises to the chloroplast membrane. Phosphoenolpyruvate/phosphate translocator that transports phosphoenolpyruvate (PEP) and dihydroxyacetone phosphate. The chain is Phosphoenolpyruvate/phosphate translocator 1, chloroplastic (PPT1) from Oryza sativa subsp. japonica (Rice).